The sequence spans 380 residues: Chaperone protein DnaJ (380 aa).

Residues 5–70 (DFYEVLGVSK…NLRARYDQYG (66 aa)) enclose the J domain. Residues 135-213 (GVSKEIKVPS…CHGEGRYQKT (79 aa)) form a CR-type zinc finger. Zn(2+)-binding residues include C148, C151, C165, C168, C187, C190, C201, and C204. CXXCXGXG motif repeat units lie at residues 148-155 (CEVCNGSG), 165-172 (CPTCHGAG), 187-194 (CPHCHGRG), and 201-208 (CRKCHGEG).

Belongs to the DnaJ family. Homodimer. Requires Zn(2+) as cofactor.

Its subcellular location is the cytoplasm. Participates actively in the response to hyperosmotic and heat shock by preventing the aggregation of stress-denatured proteins and by disaggregating proteins, also in an autonomous, DnaK-independent fashion. Unfolded proteins bind initially to DnaJ; upon interaction with the DnaJ-bound protein, DnaK hydrolyzes its bound ATP, resulting in the formation of a stable complex. GrpE releases ADP from DnaK; ATP binding to DnaK triggers the release of the substrate protein, thus completing the reaction cycle. Several rounds of ATP-dependent interactions between DnaJ, DnaK and GrpE are required for fully efficient folding. Also involved, together with DnaK and GrpE, in the DNA replication of plasmids through activation of initiation proteins. This chain is Chaperone protein DnaJ, found in Aeromonas salmonicida (strain A449).